The primary structure comprises 101 residues: MAKKSKIVKNEQRRELVQRYAERRAELKRTIRDPASSPERRAAAVSALQRLPRDSSPVRLRNRDVVDGRPRGHLRKFGLSRVRVREMAHRGELPGVRKASW.

It belongs to the universal ribosomal protein uS14 family. As to quaternary structure, part of the 30S ribosomal subunit. Contacts proteins S3 and S10.

Binds 16S rRNA, required for the assembly of 30S particles and may also be responsible for determining the conformation of the 16S rRNA at the A site. The polypeptide is Small ribosomal subunit protein uS14A (Mycolicibacterium smegmatis (strain ATCC 700084 / mc(2)155) (Mycobacterium smegmatis)).